The primary structure comprises 236 residues: 1-(5-phosphoribosyl)-5-[(5-phosphoribosylamino)methylideneamino] imidazole-4-carboxamide isomerase (236 aa).

Asp8 serves as the catalytic Proton acceptor. The Proton donor role is filled by Asp129.

Belongs to the HisA/HisF family.

It localises to the cytoplasm. It carries out the reaction 1-(5-phospho-beta-D-ribosyl)-5-[(5-phospho-beta-D-ribosylamino)methylideneamino]imidazole-4-carboxamide = 5-[(5-phospho-1-deoxy-D-ribulos-1-ylimino)methylamino]-1-(5-phospho-beta-D-ribosyl)imidazole-4-carboxamide. It participates in amino-acid biosynthesis; L-histidine biosynthesis; L-histidine from 5-phospho-alpha-D-ribose 1-diphosphate: step 4/9. This is 1-(5-phosphoribosyl)-5-[(5-phosphoribosylamino)methylideneamino] imidazole-4-carboxamide isomerase from Methanosphaerula palustris (strain ATCC BAA-1556 / DSM 19958 / E1-9c).